The primary structure comprises 121 residues: Ribonuclease P protein component (121 aa).

It belongs to the RnpA family. As to quaternary structure, consists of a catalytic RNA component (M1 or rnpB) and a protein subunit.

The enzyme catalyses Endonucleolytic cleavage of RNA, removing 5'-extranucleotides from tRNA precursor.. In terms of biological role, RNaseP catalyzes the removal of the 5'-leader sequence from pre-tRNA to produce the mature 5'-terminus. It can also cleave other RNA substrates such as 4.5S RNA. The protein component plays an auxiliary but essential role in vivo by binding to the 5'-leader sequence and broadening the substrate specificity of the ribozyme. This is Ribonuclease P protein component from Coxiella burnetii (strain Dugway 5J108-111).